The sequence spans 409 residues: Peptidase T (409 aa).

Residue H78 coordinates Zn(2+). Residue D80 is part of the active site. Residue D139 participates in Zn(2+) binding. The active-site Proton acceptor is E173. Positions 174, 196, and 378 each coordinate Zn(2+).

It belongs to the peptidase M20B family. It depends on Zn(2+) as a cofactor.

It is found in the cytoplasm. The catalysed reaction is Release of the N-terminal residue from a tripeptide.. Cleaves the N-terminal amino acid of tripeptides. The chain is Peptidase T from Shewanella sediminis (strain HAW-EB3).